The sequence spans 21 residues: Cupiennin-6e (21 aa).

The residue at position 21 (Ser21) is a Serine amide.

Expressed by the venom gland.

The protein localises to the secreted. The polypeptide is Cupiennin-6e (Cupiennius salei (American wandering spider)).